Here is a 74-residue protein sequence, read N- to C-terminus: Lantibiotic lichenicidin A1 (74 aa).

A propeptide spanning residues 1 to 42 (MSKKEMILSWKNPMYRTESSYHPAGNILKELQEEEQHSIAGG) is cleaved from the precursor. A 2-oxobutanoic acid modification is found at Thr43. A cross-link (beta-methyllanthionine (Thr-Cys)) is located at residues 45-49 (TLSTC). Ser47 carries the 2,3-didehydroalanine (Ser) modification. A (Z)-2,3-didehydrobutyrine modification is found at Thr48. The segment at residues 53-63 (SKPLGNNGYLC) is a cross-link (lanthionine (Ser-Cys)). 2 cross-links (beta-methyllanthionine (Thr-Cys)) span residues 64-69 (TVTKEC) and 66-73 (TKECMPSC).

Post-translationally, maturation of lantibiotics involves the enzymatic conversion of Thr, and Ser into dehydrated AA and the formation of thioether bonds with cysteine. This is followed by membrane translocation and cleavage of the modified precursor.

Its subcellular location is the secreted. It is found in the cell wall. Lanthionine-containing peptide antibiotic (lantibiotic) active on Gram-positive bacteria. The bactericidal activity of lantibiotics is based on depolarization of energized bacterial cytoplasmic membranes, initiated by the formation of aqueous transmembrane pores. When present individually, LchA1 exhibits activity towards L.lactis HP. When combined with LchA2, it displays activity towards a broad spectrum of non-pathogenic and pathogenic Gram-positive bacteria including strains of L.monocytogenes, methicillin-resistant S.aureus, S.pneumoniae and strains of vancomycin-resistant enterococci, but not towards E.faecium L4001 and BM4147-1. Combined LchA1 and LchA2 peptides also inhibit Bacillus sp. HIL-Y85/54728, L.lactis DPC3417 and B.halodurans C-125, which produce lantibiotics themselves. Inactivated by proteinase K and pronase E, but not by trypsin and chymotrypsin. This is Lantibiotic lichenicidin A1 from Bacillus licheniformis (strain ATCC 14580 / DSM 13 / JCM 2505 / CCUG 7422 / NBRC 12200 / NCIMB 9375 / NCTC 10341 / NRRL NRS-1264 / Gibson 46).